Consider the following 140-residue polypeptide: Large ribosomal subunit protein bL17 (140 aa).

It belongs to the bacterial ribosomal protein bL17 family. In terms of assembly, part of the 50S ribosomal subunit. Contacts protein L32.

The chain is Large ribosomal subunit protein bL17 from Methylobacterium nodulans (strain LMG 21967 / CNCM I-2342 / ORS 2060).